We begin with the raw amino-acid sequence, 857 residues long: DNA mismatch repair protein MutS (857 aa).

603 to 610 (GPNMAGKS) lines the ATP pocket.

This sequence belongs to the DNA mismatch repair MutS family.

In terms of biological role, this protein is involved in the repair of mismatches in DNA. It is possible that it carries out the mismatch recognition step. This protein has a weak ATPase activity. The polypeptide is DNA mismatch repair protein MutS (Methanothrix thermoacetophila (strain DSM 6194 / JCM 14653 / NBRC 101360 / PT) (Methanosaeta thermophila)).